The primary structure comprises 619 residues: MYNILDNYEDVDDIKNMSSDELKEFASEIRKFLIDKISKTGGHLASNLGVVELTLSLHKVFNLKKDKIIWDVGHQAYVHKILTGRKDKFDSLKQFNGLSGFPKRNESIYDAFETGHSSTSISAASGIARARDLSKDNYDVIAVIGDGALTGGMALEALNDIGYKKTNVIIILNDNQMSIAKNVGSISKYLNKIRLDPKYNKLKKDVKTKLQRTNIGSEVANSIERIKGGIKQMVVSGMFFEDIGIKYLGPIDGHNIEELTSVISKAKEIKGPVILHVKTQKGKGYSYAEENPNKFHSIGKFNSKTGEALSKPKDTYSKAFGKAMVQMAENNDKIVAITAAMTDGTGLCEFSKKFPQRFFDVGISEQHAVTMAAGLAATGYKPVFAVYSTFLQRAYDQVLHDVCIQKLPVVFAIDRAGIVGEDGETHQGVFDISYLSSIPNMTIMAPKCVEELNYIMNWAVKQNYPIAVRYPKGGNDISDVLAPLKEFRHGKWEILKDGKDVAIVAVGKMVQRAMVVRDELLKYGIDCAIINATFIKPIDKDTLNRFARDNYKFVVIEDNVLHGGIGSLILEHLNDMKFKNDVLNLGFKDEFITHGNIEILYKLYDLDIEGICKRIISFK.

Thiamine diphosphate contacts are provided by residues histidine 74 and 115-117 (GHS). Aspartate 146 is a Mg(2+) binding site. Thiamine diphosphate-binding positions include 147–148 (GA), asparagine 175, tyrosine 285, and glutamate 365. Asparagine 175 is a Mg(2+) binding site.

This sequence belongs to the transketolase family. DXPS subfamily. Homodimer. Mg(2+) is required as a cofactor. The cofactor is thiamine diphosphate.

It catalyses the reaction D-glyceraldehyde 3-phosphate + pyruvate + H(+) = 1-deoxy-D-xylulose 5-phosphate + CO2. It functions in the pathway metabolic intermediate biosynthesis; 1-deoxy-D-xylulose 5-phosphate biosynthesis; 1-deoxy-D-xylulose 5-phosphate from D-glyceraldehyde 3-phosphate and pyruvate: step 1/1. Functionally, catalyzes the acyloin condensation reaction between C atoms 2 and 3 of pyruvate and glyceraldehyde 3-phosphate to yield 1-deoxy-D-xylulose-5-phosphate (DXP). This is 1-deoxy-D-xylulose-5-phosphate synthase from Clostridium acetobutylicum (strain ATCC 824 / DSM 792 / JCM 1419 / IAM 19013 / LMG 5710 / NBRC 13948 / NRRL B-527 / VKM B-1787 / 2291 / W).